Consider the following 1223-residue polypeptide: DNA-directed RNA polymerase subunit beta'' (1223 aa).

Zn(2+)-binding residues include Cys233, Cys307, Cys314, and Cys317.

Belongs to the RNA polymerase beta' chain family. RpoC2 subfamily. As to quaternary structure, in plastids the minimal PEP RNA polymerase catalytic core is composed of four subunits: alpha, beta, beta', and beta''. When a (nuclear-encoded) sigma factor is associated with the core the holoenzyme is formed, which can initiate transcription. Requires Zn(2+) as cofactor.

The protein localises to the plastid. The protein resides in the chloroplast. It catalyses the reaction RNA(n) + a ribonucleoside 5'-triphosphate = RNA(n+1) + diphosphate. Its function is as follows. DNA-dependent RNA polymerase catalyzes the transcription of DNA into RNA using the four ribonucleoside triphosphates as substrates. This Mesostigma viride (Green alga) protein is DNA-directed RNA polymerase subunit beta''.